An 878-amino-acid chain; its full sequence is Ecdysone receptor (878 aa).

2 disordered regions span residues 1-27 (MKRR…SSSN) and 209-254 (GLGM…SKKG). Positions 1–263 (MKRRWSNNGG…GPAPRVQEEL (263 aa)) are modulating. 2 NR C4-type zinc fingers span residues 264–284 (CLVC…CEGC) and 300–324 (CKFG…LKKC). The nuclear receptor DNA-binding region spans 264 to 336 (CLVCGDRASG…VGMRPECVVP (73 aa)). The disordered stretch occupies residues 344–374 (RREKKAQKEKDKMTTSPSSQHGGNGSLASGG). Residues 365 to 374 (GGNGSLASGG) show a composition bias toward gly residues. Residues 419 to 654 (NQLAVIYKLI…FLEEIWDVHA (236 aa)) enclose the NR LBD domain. 2 stretches are compositionally biased toward low complexity: residues 698-709 (TSAAAAAAQHQP) and 728-759 (QTQP…QLQP). The interval 698 to 759 (TSAAAAAAQH…QPQLQTQLQP (62 aa)) is disordered.

This sequence belongs to the nuclear hormone receptor family. NR1 subfamily. Heterodimer of USP and ECR. Only the heterodimer is capable of high-affinity binding to ecdysone. Interacts with trr in an ecdysone-dependent manner. Upon ecdysone stimulation, interacts with Nup98. In terms of tissue distribution, isoform B1 predominates over isoform A in larval tissues, imaginal histoblast nests and midgut islands. Isoform A predominates over B1 in imaginal disks, and the larval prothoracic gland.

Its subcellular location is the nucleus. Its function is as follows. Receptor for ecdysone. Binds to ecdysone response elements (ECRES) following ecdysone-binding, and recruitment of a complex containing the histone methyltransferase trr, leads to activate transcription of target genes. The polypeptide is Ecdysone receptor (EcR) (Drosophila melanogaster (Fruit fly)).